The following is a 142-amino-acid chain: Hemoglobin subunit alpha (142 aa).

The Globin domain occupies 2-142; that stretch reads VLSPADKTNV…VSTVLTSKYR (141 aa). Residue Ser4 is modified to Phosphoserine. N6-succinyllysine is present on Lys8. Thr9 carries the phosphothreonine modification. Lys12 bears the N6-succinyllysine mark. Lys17 is subject to N6-acetyllysine; alternate. Lys17 bears the N6-succinyllysine; alternate mark. At Tyr25 the chain carries Phosphotyrosine. Phosphoserine is present on Ser36. N6-succinyllysine is present on Lys41. Ser50 carries the phosphoserine modification. His59 provides a ligand contact to O2. A heme b-binding site is contributed by His88. Ser103 is subject to Phosphoserine. Thr109 carries the phosphothreonine modification. Phosphoserine occurs at positions 125 and 132. A phosphothreonine mark is found at Thr135 and Thr138. A Phosphoserine modification is found at Ser139.

Belongs to the globin family. In terms of assembly, heterotetramer of two alpha chains and two beta chains. In terms of tissue distribution, red blood cells.

Its function is as follows. Involved in oxygen transport from the lung to the various peripheral tissues. Hemopressin acts as an antagonist peptide of the cannabinoid receptor CNR1. Hemopressin-binding efficiently blocks cannabinoid receptor CNR1 and subsequent signaling. The chain is Hemoglobin subunit alpha (HBA) from Sapajus apella (Brown-capped capuchin).